The sequence spans 224 residues: Peroxiredoxin-6 (224 aa).

The Thioredoxin domain maps to 5–169 (LLLGDEAPNF…ILRVVISLQL (165 aa)). The segment at 31-40 (DSWGILFSHP) is required and sufficient for targeting to lysosomes and lamellar bodies. At T44 the chain carries Phosphothreonine. C47 acts as the Cysteine sulfenic acid (-SOH) intermediate; for peroxidase activity in catalysis. At K63 the chain carries N6-acetyllysine. Phosphotyrosine is present on Y89. D140 functions as the For phospholipase activity in the catalytic mechanism. T177 is subject to Phosphothreonine; by MAPK. Position 209 is an N6-acetyllysine; alternate (K209). The residue at position 209 (K209) is an N6-succinyllysine; alternate.

The protein belongs to the peroxiredoxin family. Prx6 subfamily. Homodimer. Interacts with GSTP1; mediates PRDX6 glutathionylation and regeneration. Interacts with APEX1. Interacts with STH. May interact with FAM168B. May interact with HTR2A. Irreversibly inactivated by overoxidation of Cys-47 to sulfinic acid (Cys-SO(2)H) and sulfonic acid (Cys-SO(3)H) forms upon oxidative stress. In terms of processing, phosphorylation at Thr-177 by MAP kinases increases the phospholipase activity of the enzyme. The phosphorylated form exhibits a greater lysophosphatidylcholine acyltransferase activity compared to the non-phosphorylated form.

It localises to the cytoplasm. The protein resides in the lysosome. It catalyses the reaction a hydroperoxide + 2 glutathione = an alcohol + glutathione disulfide + H2O. The catalysed reaction is a 1,2-diacyl-sn-glycero-3-phosphocholine + H2O = a 1-acyl-sn-glycero-3-phosphocholine + a fatty acid + H(+). The enzyme catalyses a 1-acyl-sn-glycero-3-phosphocholine + an acyl-CoA = a 1,2-diacyl-sn-glycero-3-phosphocholine + CoA. It carries out the reaction 1-hexadecanoyl-sn-glycero-3-phosphocholine + hexadecanoyl-CoA = 1,2-dihexadecanoyl-sn-glycero-3-phosphocholine + CoA. It catalyses the reaction 1,2-dihexadecanoyl-sn-glycero-3-phosphocholine + H2O = 1-hexadecanoyl-sn-glycero-3-phosphocholine + hexadecanoate + H(+). In terms of biological role, thiol-specific peroxidase that catalyzes the reduction of hydrogen peroxide and organic hydroperoxides to water and alcohols, respectively. Can reduce H(2)O(2) and short chain organic, fatty acid, and phospholipid hydroperoxides. Also has phospholipase activity, and can therefore either reduce the oxidized sn-2 fatty acyl group of phospholipids (peroxidase activity) or hydrolyze the sn-2 ester bond of phospholipids (phospholipase activity). These activities are dependent on binding to phospholipids at acidic pH and to oxidized phospholipds at cytosolic pH. Plays a role in cell protection against oxidative stress by detoxifying peroxides and in phospholipid homeostasis. Exhibits acyl-CoA-dependent lysophospholipid acyltransferase which mediates the conversion of lysophosphatidylcholine (1-acyl-sn-glycero-3-phosphocholine or LPC) into phosphatidylcholine (1,2-diacyl-sn-glycero-3-phosphocholine or PC). Shows a clear preference for LPC as the lysophospholipid and for palmitoyl CoA as the fatty acyl substrate. The chain is Peroxiredoxin-6 (PRDX6) from Macaca fascicularis (Crab-eating macaque).